A 118-amino-acid polypeptide reads, in one-letter code: Large ribosomal subunit protein bL20 (118 aa).

The protein belongs to the bacterial ribosomal protein bL20 family.

Binds directly to 23S ribosomal RNA and is necessary for the in vitro assembly process of the 50S ribosomal subunit. It is not involved in the protein synthesizing functions of that subunit. The protein is Large ribosomal subunit protein bL20 of Photorhabdus laumondii subsp. laumondii (strain DSM 15139 / CIP 105565 / TT01) (Photorhabdus luminescens subsp. laumondii).